A 368-amino-acid chain; its full sequence is 3-dehydroquinate synthase (368 aa).

NAD(+)-binding positions include 71–76 (DGESFK), 105–109 (GVIGD), 129–130 (TT), Lys142, Lys151, and 169–172 (TLRT). Residues Glu184, His247, and His264 each contribute to the Zn(2+) site.

It belongs to the sugar phosphate cyclases superfamily. Dehydroquinate synthase family. Co(2+) serves as cofactor. The cofactor is Zn(2+). It depends on NAD(+) as a cofactor.

The protein localises to the cytoplasm. It catalyses the reaction 7-phospho-2-dehydro-3-deoxy-D-arabino-heptonate = 3-dehydroquinate + phosphate. The protein operates within metabolic intermediate biosynthesis; chorismate biosynthesis; chorismate from D-erythrose 4-phosphate and phosphoenolpyruvate: step 2/7. Catalyzes the conversion of 3-deoxy-D-arabino-heptulosonate 7-phosphate (DAHP) to dehydroquinate (DHQ). The polypeptide is 3-dehydroquinate synthase (Ralstonia pickettii (strain 12J)).